Reading from the N-terminus, the 151-residue chain is 3-hydroxyacyl-[acyl-carrier-protein] dehydratase FabZ (151 aa).

H54 is a catalytic residue.

The protein belongs to the thioester dehydratase family. FabZ subfamily.

The protein localises to the cytoplasm. The enzyme catalyses a (3R)-hydroxyacyl-[ACP] = a (2E)-enoyl-[ACP] + H2O. Involved in unsaturated fatty acids biosynthesis. Catalyzes the dehydration of short chain beta-hydroxyacyl-ACPs and long chain saturated and unsaturated beta-hydroxyacyl-ACPs. The sequence is that of 3-hydroxyacyl-[acyl-carrier-protein] dehydratase FabZ from Sodalis glossinidius (strain morsitans).